Reading from the N-terminus, the 402-residue chain is Protein FAM221B (402 aa).

Residues 1–35 (MEAHEIIEEPHITMDAEKHPPSKDPSAEDLQENHI) show a composition bias toward basic and acidic residues. Disordered stretches follow at residues 1 to 205 (MEAH…TARP) and 378 to 402 (DTQK…HRPL). Polar residues-rich tracts occupy residues 77 to 90 (EPSI…TPTY) and 393 to 402 (DTVSNWHRPL).

The protein belongs to the FAM221 family.

In Homo sapiens (Human), this protein is Protein FAM221B (FAM221B).